A 222-amino-acid polypeptide reads, in one-letter code: Large ribosomal subunit protein mL64 (222 aa).

Disordered stretches follow at residues 14-40 and 188-222; these read LTAT…PWWP and KRLK…APSS. A coiled-coil region spans residues 144 to 213; that stretch reads EKAQADKERR…AALAAAAAQD (70 aa). The Nuclear localization signal motif lies at 184-200; that stretch reads KKERKRLKEEKQRQKQE. Over residues 188-201 the composition is skewed to basic and acidic residues; the sequence is KRLKEEKQRQKQEA. The segment covering 202–216 has biased composition (low complexity); that stretch reads RAAALAAAAAQDPAA.

It belongs to the mitochondrion-specific ribosomal protein mL64 family. Component of the mitochondrial ribosome large subunit (39S) which comprises a 16S rRNA and about 50 distinct proteins. Interacts with GADD45A, GADD45B and GADD45G. Interacts with NR4A1 via the NR4A1 AB domain. Interacts with ATAD3A and ATAD3B.

It localises to the mitochondrion. The protein resides in the nucleus. Acts as a negative regulator of G1 to S cell cycle phase progression by inhibiting cyclin-dependent kinases. Inhibitory effects are additive with GADD45 proteins but also occur in the absence of GADD45 proteins. Acts as a repressor of the orphan nuclear receptor NR4A1 by inhibiting AB domain-mediated transcriptional activity. May be involved in the hormone-mediated regulation of NR4A1 transcriptional activity. May play a role in mitochondrial protein synthesis. The chain is Large ribosomal subunit protein mL64 (GADD45GIP1) from Chlorocebus aethiops (Green monkey).